The sequence spans 152 residues: Nucleoside diphosphate kinase A 1 (152 aa).

Residues Lys12, Phe60, Arg88, Thr94, Arg105, and Asn115 each coordinate ATP. Catalysis depends on His118, which acts as the Pros-phosphohistidine intermediate.

Belongs to the NDK family. As to quaternary structure, homohexamer. Mg(2+) serves as cofactor. Post-translationally, the N-terminus is blocked.

The protein resides in the cytoplasm. It localises to the cell membrane. The protein localises to the nucleus. It carries out the reaction a 2'-deoxyribonucleoside 5'-diphosphate + ATP = a 2'-deoxyribonucleoside 5'-triphosphate + ADP. The catalysed reaction is a ribonucleoside 5'-diphosphate + ATP = a ribonucleoside 5'-triphosphate + ADP. With respect to regulation, autophosphorylation at His-118 increases serine/threonine protein kinase activity of the enzyme. Interaction with the SET complex inhibits exonuclease activity. Functionally, major role in the synthesis of nucleoside triphosphates other than ATP. Possesses nucleoside-diphosphate kinase, serine/threonine-specific protein kinase, geranyl and farnesyl pyrophosphate kinase, histidine protein kinase and 3'-5' exonuclease activities. Involved in cell proliferation, differentiation and development, signal transduction, G protein-coupled receptor endocytosis, and gene expression. Required for neural development including neural patterning and cell fate determination. In Bos taurus (Bovine), this protein is Nucleoside diphosphate kinase A 1 (NME1-1).